A 635-amino-acid chain; its full sequence is 1-deoxy-D-xylulose-5-phosphate synthase (635 aa).

Thiamine diphosphate-binding positions include H77 and 118–120 (GHA). D150 is a binding site for Mg(2+). Thiamine diphosphate contacts are provided by residues 151–152 (AS), N179, Y290, and E372. Mg(2+) is bound at residue N179.

This sequence belongs to the transketolase family. DXPS subfamily. As to quaternary structure, homodimer. It depends on Mg(2+) as a cofactor. Thiamine diphosphate is required as a cofactor.

It carries out the reaction D-glyceraldehyde 3-phosphate + pyruvate + H(+) = 1-deoxy-D-xylulose 5-phosphate + CO2. Its pathway is metabolic intermediate biosynthesis; 1-deoxy-D-xylulose 5-phosphate biosynthesis; 1-deoxy-D-xylulose 5-phosphate from D-glyceraldehyde 3-phosphate and pyruvate: step 1/1. Catalyzes the acyloin condensation reaction between C atoms 2 and 3 of pyruvate and glyceraldehyde 3-phosphate to yield 1-deoxy-D-xylulose-5-phosphate (DXP). In Leptospira borgpetersenii serovar Hardjo-bovis (strain JB197), this protein is 1-deoxy-D-xylulose-5-phosphate synthase.